A 71-amino-acid polypeptide reads, in one-letter code: Small ribosomal subunit protein bS18 (71 aa).

It belongs to the bacterial ribosomal protein bS18 family. Part of the 30S ribosomal subunit. Forms a tight heterodimer with protein bS6.

In terms of biological role, binds as a heterodimer with protein bS6 to the central domain of the 16S rRNA, where it helps stabilize the platform of the 30S subunit. This is Small ribosomal subunit protein bS18 from Microcystis aeruginosa (strain NIES-843 / IAM M-2473).